The sequence spans 502 residues: Neuronal acetylcholine receptor subunit alpha-7 (502 aa).

The signal sequence occupies residues 1-22 (MCGGRGGIWLALAAALLHVSLQ). The Extracellular segment spans residues 23-233 (GEFQRRLYKE…VTMRRRTLYY (211 aa)). Residues Arg-42 and Val-44 each contribute to the Ca(2+) site. Residues Asn-46, Asn-90, and Asn-133 are each glycosylated (N-linked (GlcNAc...) asparagine). Residues Cys-150 and Cys-164 are joined by a disulfide bond. Ca(2+) contacts are provided by Ser-172 and Tyr-210. Cys-212 and Cys-213 are joined by a disulfide. The next 3 membrane-spanning stretches (helical) occupy residues 234 to 254 (GLNL…VFLL), 262 to 282 (ISLG…VAEI), and 295 to 315 (QYFA…VIVL). The interval 260–267 (EKISLGIT) is essential for TMEM35A/NACHO-mediated proper subunit assembly and trafficking to cell membrane. Topologically, residues 316 to 469 (RYHHHDPDGG…WKFAACVVDR (154 aa)) are cytoplasmic. Residues 470–490 (LCLMAFSVFTIICTIGILMSA) traverse the membrane as a helical segment.

It belongs to the ligand-gated ion channel (TC 1.A.9) family. Acetylcholine receptor (TC 1.A.9.1) subfamily. Alpha-7/CHRNA7 sub-subfamily. In terms of assembly, homopentamer. Can also form heteropentamers with CHRNB2, mainly found in basal forebrain cholinergic neurons. Interacts with RIC3; which is required for proper folding and assembly. Interacts with LYPD6. Interacts with CANX. Post-translationally, glycosylations at Asn-46, Asn-90 and Asn-133 are essential for TMEM35A/NACHO-mediated proper subunit assembly and trafficking to the cell membrane. As to expression, expressed in neurons. Expressed in umbrella cells of urothelium (at protein level).

Its subcellular location is the postsynaptic cell membrane. It localises to the cell membrane. It catalyses the reaction Ca(2+)(in) = Ca(2+)(out). It carries out the reaction K(+)(in) = K(+)(out). The catalysed reaction is Na(+)(in) = Na(+)(out). The enzyme catalyses choline(out) = choline(in). It catalyses the reaction NH4(+)(in) = NH4(+)(out). It carries out the reaction L-arginine(in) = L-arginine(out). The catalysed reaction is guanidine(out) = guanidine(in). Its activity is regulated as follows. Activated by a myriad of ligands such as acetylcholine, cytisine, nicotine, choline and epibatidine. Oligomeric amyloid-beta protein 42 activates specifially CHRNA7:CHRNB2 nAchRs. Activity is modulated by positive allosteric modulators (PAMs), such as flavonoids, with a wide range of chemical diversity, pharmacological sensitivity and efficacy. AChR activity is inhibited by the antagonists alpha-conotoxons RgIA, ImI and ImII, small disulfide-constrained peptides from cone snails. Alpha-conotoxin PnIC selectively inhibits CHRNA7:CHRNB2 over CHRNA7 homopentamer. Its function is as follows. Component of neuronal acetylcholine receptors (nAChRs) that function as pentameric, ligand-gated cation channels with high calcium permeability among other activities. nAChRs are excitatory neurotrasnmitter receptors formed by a collection of nAChR subunits known to mediate synaptic transmission in the nervous system and the neuromuscular junction. Each nAchR subunit confers differential attributes to channel properties, including activation, deactivation and desensitization kinetics, pH sensitivity, cation permeability, and binding to allosteric modulators. CHRNA7 forms homopentameric neuronal acetylcholine receptors abundantly expressed in the central nervous system, characterized by fast desensitization and high calcium permeability. Also forms heteropentamers with CHRNB2, mainly expressed in basal forebrain cholinergic neurons. Involved in the modulation of calcium-dependent signaling pathways and influences the release of neurotransmitters, including dopamine, glutamate and GABA. Also expressed in non-neuronal cells such as immune cells like lymphocytes, monocytes and macrophages. In T cells, activation induces metabotropic signaling that results in an increase of intracellular Ca2+ concentrations, independent of ionotropic receptor functions. In macrophages, required for acetylcholine-mediated inhibition of TNF and other inflammatory cytokine release. Once activated by acetylcholine, nicotine or other agonists, selectively inhibits production of pro-inflammatory cytokines while leaving anti-inflammatory cytokines undisturbed. Stimulates the cholinergic anti-inflammatory pathway, controlling inflammation by inhibiting NFKB nuclear translocation and activating the JAK2-STAT3 pathway, independently of ion channel activity. Also expressed in the urothelium where it modulates reflex bladder activity by increasing intracellular calcium through internal stores and decreasing basal ATP release. This chain is Neuronal acetylcholine receptor subunit alpha-7 (Chrna7), found in Rattus norvegicus (Rat).